A 304-amino-acid chain; its full sequence is Ribosomal RNA small subunit methyltransferase H (304 aa).

Residues 37-39 (GGH), D57, F79, D100, and H107 each bind S-adenosyl-L-methionine.

Belongs to the methyltransferase superfamily. RsmH family.

It is found in the cytoplasm. The enzyme catalyses cytidine(1402) in 16S rRNA + S-adenosyl-L-methionine = N(4)-methylcytidine(1402) in 16S rRNA + S-adenosyl-L-homocysteine + H(+). Specifically methylates the N4 position of cytidine in position 1402 (C1402) of 16S rRNA. In Phocaeicola vulgatus (strain ATCC 8482 / DSM 1447 / JCM 5826 / CCUG 4940 / NBRC 14291 / NCTC 11154) (Bacteroides vulgatus), this protein is Ribosomal RNA small subunit methyltransferase H.